The following is a 337-amino-acid chain: Major envelope glycoprotein (337 aa).

N-linked (GlcNAc...) asparagine; by host glycosylation is found at Asn-76, Asn-114, Asn-271, and Asn-301.

This sequence belongs to the baculoviridae gp64 family. Post-translationally, palmitoylated.

It is found in the virion membrane. The protein resides in the host cell membrane. Functionally, envelope phosphoglycoprotein which mediates the fusion of viral and host endosomal membranes leading to virus entry into the host cell. The polypeptide is Major envelope glycoprotein (GP67) (Lepidoptera (butterflies and moths)).